Consider the following 131-residue polypeptide: DNA-binding protein inhibitor ID-4 (131 aa).

The bHLH domain maps to 36–88 (ARYKMEEEETLCLQYDMNDCYSRLKRLVPTIPPNKKVSKVEILQHVIDYILDL).

In terms of assembly, heterodimer with other HLH proteins. As to expression, during embryonic development, expressed in a number of neural tissues, including Rohon-Beard neurons, olfactory placode, eye primordia, and the trigeminal ganglia. Also expressed in other organs including the pronephros and liver primordium. Pronephric development begins by stage 25 and increases during tailbud stages. Expressed in both the tubules and the duct. As embryogenesis progresses, expressed in the migrating melanocytes and lateral line structures.

It is found in the nucleus. Transcriptional regulator (lacking a basic DNA binding domain) which negatively regulates the basic helix-loop-helix (bHLH) transcription factors by forming heterodimers and inhibiting their DNA binding and transcriptional activity. Inhibits the activity of both neurogenic (neurog1/neurogenin, neurod1/neuroD) and myogenic (myod1/myoD) bHLH factors. This Xenopus laevis (African clawed frog) protein is DNA-binding protein inhibitor ID-4.